The chain runs to 486 residues: Mogroside I-E synthase (486 aa).

UDP-alpha-D-glucose contacts are provided by serine 302, cysteine 360, glutamine 362, tryptophan 380, asparagine 381, serine 382, glutamate 385, aspartate 401, and glutamine 402.

This sequence belongs to the UDP-glycosyltransferase family. Highly expressed in young fruits 15 days after anthesis (15-DAA).

It carries out the reaction mogrol + UDP-alpha-D-glucose = mogroside IE + UDP + H(+). It catalyses the reaction mogroside I-A1 + UDP-alpha-D-glucose = mogroside IIE + UDP + H(+). The catalysed reaction is mogroside II-A1 + UDP-alpha-D-glucose = mogroside IIIX + UDP + H(+). The enzyme catalyses mogroside II-A + UDP-alpha-D-glucose = mogroside III + UDP + H(+). The protein operates within secondary metabolite biosynthesis; terpenoid biosynthesis. In terms of biological role, UDP-glycosyltransferase involved in the biosynthesis of cucurbitacin and mogroside tetracyclic triterpene natural products (e.g. siamenoside I and mogrosides IV, V and VI). Cucurbitacins have cytotoxic properties and exhibit deterrent taste as a defense barrier against herbivores. Mogrosides are nonsugar highly oxygenated compounds used as high-intensity zero-calorie sweeteners; they also possess pharmacological properties such as regulating immunity, lowering blood sugar and lipid levels, protecting the liver, and acting as antioxidants and antitumor agents. Catalyzes the C3 primary glucosylation of mogrol, mogroside I-A1, mogroside II-A1 and mogroside II-A. The polypeptide is Mogroside I-E synthase (Siraitia grosvenorii (Monk's fruit)).